The following is a 257-amino-acid chain: NAD-dependent protein deacylase (257 aa).

Residues 1-252 (MLGHAAKLLA…LRRVKDIMAE (252 aa)) form the Deacetylase sirtuin-type domain. An NAD(+)-binding site is contributed by 20–39 (GAGISAESGIPTFRGRNGLW). Residues tyrosine 64 and arginine 67 each coordinate substrate. 98–101 (QNVD) serves as a coordination point for NAD(+). Residue histidine 116 is the Proton acceptor of the active site. Cysteine 124, cysteine 127, cysteine 151, and cysteine 154 together coordinate Zn(2+). NAD(+) contacts are provided by residues 191 to 193 (GTS), 217 to 219 (NVE), and alanine 235.

This sequence belongs to the sirtuin family. Class III subfamily. Requires Zn(2+) as cofactor.

Its subcellular location is the cytoplasm. It catalyses the reaction N(6)-acetyl-L-lysyl-[protein] + NAD(+) + H2O = 2''-O-acetyl-ADP-D-ribose + nicotinamide + L-lysyl-[protein]. The enzyme catalyses N(6)-succinyl-L-lysyl-[protein] + NAD(+) + H2O = 2''-O-succinyl-ADP-D-ribose + nicotinamide + L-lysyl-[protein]. Functionally, NAD-dependent lysine deacetylase and desuccinylase that specifically removes acetyl and succinyl groups on target proteins. Modulates the activities of several proteins which are inactive in their acylated form. Deacetylates the N-terminal lysine residue of Alba, the major archaeal chromatin protein and that, in turn, increases Alba's DNA binding affinity, thereby repressing transcription. The protein is NAD-dependent protein deacylase of Thermococcus kodakarensis (strain ATCC BAA-918 / JCM 12380 / KOD1) (Pyrococcus kodakaraensis (strain KOD1)).